Reading from the N-terminus, the 490-residue chain is Aspartyl/glutamyl-tRNA(Asn/Gln) amidotransferase subunit B (490 aa).

Belongs to the GatB/GatE family. GatB subfamily. In terms of assembly, heterotrimer of A, B and C subunits.

The enzyme catalyses L-glutamyl-tRNA(Gln) + L-glutamine + ATP + H2O = L-glutaminyl-tRNA(Gln) + L-glutamate + ADP + phosphate + H(+). It catalyses the reaction L-aspartyl-tRNA(Asn) + L-glutamine + ATP + H2O = L-asparaginyl-tRNA(Asn) + L-glutamate + ADP + phosphate + 2 H(+). Its function is as follows. Allows the formation of correctly charged Asn-tRNA(Asn) or Gln-tRNA(Gln) through the transamidation of misacylated Asp-tRNA(Asn) or Glu-tRNA(Gln) in organisms which lack either or both of asparaginyl-tRNA or glutaminyl-tRNA synthetases. The reaction takes place in the presence of glutamine and ATP through an activated phospho-Asp-tRNA(Asn) or phospho-Glu-tRNA(Gln). This chain is Aspartyl/glutamyl-tRNA(Asn/Gln) amidotransferase subunit B, found in Methylobacterium radiotolerans (strain ATCC 27329 / DSM 1819 / JCM 2831 / NBRC 15690 / NCIMB 10815 / 0-1).